Reading from the N-terminus, the 475-residue chain is Sulfate adenylyltransferase subunit 1 (475 aa).

A tr-type G domain is found at 25 to 239; it reads KSLLRFLTCG…EVLETVEIQR (215 aa). A G1 region spans residues 34–41; sequence GSVDDGKS. 34 to 41 lines the GTP pocket; that stretch reads GSVDDGKS. A G2 region spans residues 92 to 96; the sequence is GITID. Positions 113–116 are G3; the sequence is DTPG. Residues 113 to 117 and 168 to 171 contribute to the GTP site; these read DTPGH and NKMD. The tract at residues 168 to 171 is G4; that stretch reads NKMD. The segment at 206–208 is G5; that stretch reads SAL.

This sequence belongs to the TRAFAC class translation factor GTPase superfamily. Classic translation factor GTPase family. CysN/NodQ subfamily. In terms of assembly, heterodimer composed of CysD, the smaller subunit, and CysN.

It catalyses the reaction sulfate + ATP + H(+) = adenosine 5'-phosphosulfate + diphosphate. Its pathway is sulfur metabolism; hydrogen sulfide biosynthesis; sulfite from sulfate: step 1/3. With CysD forms the ATP sulfurylase (ATPS) that catalyzes the adenylation of sulfate producing adenosine 5'-phosphosulfate (APS) and diphosphate, the first enzymatic step in sulfur assimilation pathway. APS synthesis involves the formation of a high-energy phosphoric-sulfuric acid anhydride bond driven by GTP hydrolysis by CysN coupled to ATP hydrolysis by CysD. The chain is Sulfate adenylyltransferase subunit 1 from Shigella flexneri serotype 5b (strain 8401).